The primary structure comprises 1027 residues: Sodium/potassium-transporting ATPase subunit alpha-1 (1027 aa).

Residues 1–5 (MGVGD) constitute a propeptide that is removed on maturation. Positions 1–10 (MGVGDGRDQY) are enriched in basic and acidic residues. The tract at residues 1–39 (MGVGDGRDQYELAAMSEQSGKKKSKNKKEKKEKDMDELK) is disordered. The Cytoplasmic portion of the chain corresponds to 6–90 (GRDQYELAAM…NALTPPPTTP (85 aa)). Ser16 carries the phosphoserine; by PKC modification. Over residues 29–39 (EKKEKDMDELK) the composition is skewed to basic and acidic residues. The interval 85 to 87 (PPP) is interaction with phosphoinositide-3 kinase. Residues 91–111 (EWVKFCKQMFGGFSMLLWTGA) form a helical membrane-spanning segment. Over 112–134 (VLCFLAYGILAAMEDEPANDNLY) the chain is Extracellular. A helical transmembrane segment spans residues 135 to 155 (LGVVLSAVVIITGCFSYYQDA). At 156–291 (KSSKIMDSFK…VGRTPISIEI (136 aa)) the chain is on the cytoplasmic side. A disordered region spans residues 217-238 (DNSSLTGESEPQTRSPDFSNDN). The helical transmembrane segment at 292–311 (EHFIHIITGVAVFLGVSFLL) threads the bilayer. Residues 312-323 (LSLVLGYSWLEA) are Extracellular-facing. A helical membrane pass occupies residues 324–341 (VIFLIGIIVANVPEGLLA). At 342-776 (TVTVCLTLTA…EEGRLIFDNL (435 aa)) the chain is on the cytoplasmic side. The 4-aspartylphosphate intermediate role is filled by Asp379. Residue Lys490 coordinates ATP. Residues Asp721 and Asp725 each contribute to the Mg(2+) site. Residues 777-796 (KKSIAYTLTSNIPEITPFLF) form a helical membrane-spanning segment. At 797-806 (FIIANIPLPL) the chain is on the extracellular side. A helical transmembrane segment spans residues 807 to 827 (GTVTILCIDLGTDMLPAISLA). At 828–847 (YEAAESDIMKRQPRNPKTDK) the chain is on the cytoplasmic side. Residues 848–870 (LVNERLISIAYGQIGMIQALAGF) form a helical membrane-spanning segment. At 871–922 (FTYFVILAENGFLPPRLLGIRMNWDDKYINDLEDSYGQQWTYEQRKIVEFTC) the chain is on the extracellular side. Residues 923-942 (HTAFFTSIVIVQWADLIICK) form a helical membrane-spanning segment. At 943-955 (TRRNSVFQQGMKN) the chain is on the cytoplasmic side. A Phosphoserine; by PKA modification is found at Ser947. Residues 956–974 (KILIFGLFEETALAAFLSY) form a helical membrane-spanning segment. At 975–989 (CPGMDVALRMYPLKP) the chain is on the extracellular side. A helical membrane pass occupies residues 990–1010 (NWWFCAFPYSLLIFIYDEIRK). The Cytoplasmic segment spans residues 1011–1027 (LILRRNPGGWMERETYY).

This sequence belongs to the cation transport ATPase (P-type) (TC 3.A.3) family. Type IIC subfamily. In terms of assembly, the sodium/potassium-transporting ATPase is composed of a catalytic alpha subunit, an auxiliary non-catalytic beta subunit and an additional regulatory subunit.

It is found in the cell membrane. It localises to the sarcolemma. It catalyses the reaction K(+)(out) + Na(+)(in) + ATP + H2O = K(+)(in) + Na(+)(out) + ADP + phosphate + H(+). This is the catalytic component of the active enzyme, which catalyzes the hydrolysis of ATP coupled with the exchange of sodium and potassium ions across the plasma membrane. This action creates the electrochemical gradient of sodium and potassium ions, providing the energy for active transport of various nutrients. The sequence is that of Sodium/potassium-transporting ATPase subunit alpha-1 (atp1a1) from Catostomus commersonii (White sucker).